Reading from the N-terminus, the 209-residue chain is Uracil phosphoribosyltransferase (209 aa).

Residues Arg79, Arg104, and Asp131–Ser139 each bind 5-phospho-alpha-D-ribose 1-diphosphate. Uracil-binding positions include Ile194 and Gly199–Ala201. Residue Asp200 participates in 5-phospho-alpha-D-ribose 1-diphosphate binding.

This sequence belongs to the UPRTase family. Mg(2+) serves as cofactor.

The catalysed reaction is UMP + diphosphate = 5-phospho-alpha-D-ribose 1-diphosphate + uracil. Its pathway is pyrimidine metabolism; UMP biosynthesis via salvage pathway; UMP from uracil: step 1/1. Its activity is regulated as follows. Allosterically activated by GTP. Functionally, catalyzes the conversion of uracil and 5-phospho-alpha-D-ribose 1-diphosphate (PRPP) to UMP and diphosphate. The chain is Uracil phosphoribosyltransferase from Lactobacillus gasseri (strain ATCC 33323 / DSM 20243 / BCRC 14619 / CIP 102991 / JCM 1131 / KCTC 3163 / NCIMB 11718 / NCTC 13722 / AM63).